We begin with the raw amino-acid sequence, 1711 residues long: MALFHNLEPKRSIDFMSGARTSSGSPSVSYSNSLPSPHTALVAPLSKMQRALWFDYISAPESTMYNLTLKFKLDQESEEYDGSISAILRAIDFLTKRHGMLRSTFHNSSNPSQPPYFAEIDSRHAHPTTHIVSSSEQLKRAALRGFDLSVDGPIRWIVFTNVKSNELYAVAHHIAVDGSSMSQLSKEIITLLTHYKHQSAEMLAPTTTSNYGLYCLAQDSYTHQESYKKALHFWSSQIAGTLPMEWNSSMLRTNPARLTQTTSQLDHRVCSTWLSLTPQELKAWGNLYKTSWFRVATALIGLLCAKHSKHKFRTDQSLLVAFGARPEQSNDVLGHFANGMPIKIPISMLERSESAQLGGFVKEVSKNISAAKREEMFPYVDLVQHARRNGLNSEHRVSVTFSPKLASDICSLYPVEGVCDLFFCFLEEEDGGAILGLIYDPQLFTPDAIQTLREDFIQLIRFSLSPEDATQSLASFPGLSARQQFNGPPLHDVVAIDQCRVHALVQQQATLRPEQLALYSEELQMYMTYEELEMATNQAAHCLRACGSCKGEVVALHLSHGFDMIIWIYAAFKSGAAFTVVDPSYPPTRKSAIFELSKAKICVYDSKTAPSLQWAIDENLCSVFITTAGSDNTPIDRFPTHPLTDEGSTLDDLAYIIFTSGSTGLPKGVMVAHRQLSHFVSAARDCTPVGPSVRALQVLSFSFDAAVLEYAATLVYGGTLCFAEHRDALVGDYLADVVDANKINHLTATPSILATLPAAREMPTLRSICVGGEHCPEGVLNTWRQRVQLIHAYGPTETTVAVTLHRLPREIDPEEVADGVSPSSIMGKPLPNVKIYVCDTSRRILKNGKIGELHISGPQVSRGYIDREELNAEKFWINEHGERTYASGDRGRILPDGTVLLYGRINNREIKVRGYRLELGEIEKMITKADTQVRTVSVQANVTGDGLLAFVTPRTVDTEALRLALAKYAPRYMIPSEILAIDALPCTVNDKVDHARVQRDMADLRARASKLGTASLLTPNDTPLQSPSPPLSDISQLDLTDDLEWAAAKARIAEIWRQVLAAPGPILGGVKFFEAGGNSLLVLKLKAEIEGAFGVKVSFSDLFQNSTVDSQVGLVQSRRGSSGSPRTVRSHARPQRKAKTPPRQARPETPESDYDQLPDLRDDVQQSICSIWMEVLGYHGKLDAKSNFFELGGTSLQIPILHKALLREFPASNVSLVKVFQSATLAAQVELLGRFTESPRFSPRPAITPSAAVVSRSPRRPSSPAREQYAIVGMSGRFPGASTIPEFWDLLVHQRDGIQAIGGLEDAPLGPNEVLVQRRGLIKDVEHFDHEFWKMPKNYALRMDPQKRHFLNVALEALDDAGIELDPQGQNDVGIFVGSSENTFREYCATRSEDAFEMRHSHHMDTAVSATAAYYLNTFGPNVTLNTACSSALVALKLGMDALATGQTKVVCVGGCTIEYPLQGYITEPGKVLSTTGEVRPFDAASDGSVPGDAVCAVIIKRATDALADGDQIYAFVDGAAVGSDGHLDKPGITVPSPRGQAETIKRAMQQAHARPEQIAHVEVHGSGTRMGDALELEGLSIAYDQHLGRQAGQRPVSVGSNKGNFGNCEAASGLVSIIKAALSISNGVVPPLRKLETVGDHVDFMRLNLTPAREPLRLSRHDKVGVTSLGLGGSTAHVVLSAPPGNARRTKEWKQIRELHPTLLPCGPAN.

The segment at 43–397 is condensation (C) domain; that stretch reads APLSKMQRAL…RNGLNSEHRV (355 aa). Residues 506-907 form an adenylation (A) domain region; it reads QQQATLRPEQ…TVLLYGRINN (402 aa). Residues 1043–1119 form the Carrier 1 domain; that stretch reads LEWAAAKARI…SQVGLVQSRR (77 aa). S1079 is modified (O-(pantetheine 4'-phosphoryl)serine). Residues 1114 to 1127 show a composition bias toward polar residues; that stretch reads LVQSRRGSSGSPRT. The segment at 1114–1159 is disordered; that stretch reads LVQSRRGSSGSPRTVRSHARPQRKAKTPPRQARPETPESDYDQLPD. The span at 1128-1140 shows a compositional bias: basic residues; sequence VRSHARPQRKAKT. Positions 1159-1236 constitute a Carrier 2 domain; sequence DLRDDVQQSI…AQVELLGRFT (78 aa). S1195 carries the O-(pantetheine 4'-phosphoryl)serine modification. The Ketosynthase family 3 (KS3) domain occupies 1266-1683; sequence REQYAIVGMS…GSTAHVVLSA (418 aa). Residues C1429, H1565, and N1608 each act as for beta-ketoacyl synthase activity in the active site.

The protein in the N-terminal section; belongs to the NRP synthetase family. Requires pantetheine 4'-phosphate as cofactor.

The enzyme catalyses acetoacetyl-CoA + L-isoleucine + ATP = tenuazonic acid + AMP + diphosphate + CoA + 2 H(+). Hybrid PKS-NRPS synthetase that mediates the biosynthesis of the toxin tenuazonic acid (TeA), an inhibitor of protein biosynthesis on ribosomes by suppressing the release of new protein. TAS1 alone is sufficient for TeA synthesis via the condensation of isoleucine (Ile) with acetoacetyl-CoA by the N-terminal NRPS module and subsequent cyclization conducted by the C-terminal KS domain. In Botryobasidium botryosum (strain FD-172 SS1), this protein is Hybrid PKS-NRPS synthetase TAS1.